Consider the following 373-residue polypeptide: tRNA-specific 2-thiouridylase MnmA (373 aa).

ATP contacts are provided by residues 7–14 (AMSGGVDS) and L33. C101 acts as the Nucleophile in catalysis. Residues C101 and C215 are joined by a disulfide bond. Residue G125 participates in ATP binding. The segment at 165 to 167 (KDQ) is interaction with tRNA. The active-site Cysteine persulfide intermediate is C215.

This sequence belongs to the MnmA/TRMU family.

It localises to the cytoplasm. It carries out the reaction S-sulfanyl-L-cysteinyl-[protein] + uridine(34) in tRNA + AH2 + ATP = 2-thiouridine(34) in tRNA + L-cysteinyl-[protein] + A + AMP + diphosphate + H(+). Its function is as follows. Catalyzes the 2-thiolation of uridine at the wobble position (U34) of tRNA, leading to the formation of s(2)U34. In Roseiflexus sp. (strain RS-1), this protein is tRNA-specific 2-thiouridylase MnmA.